Reading from the N-terminus, the 573-residue chain is NEDD4-binding protein 3-A (573 aa).

Disordered regions lie at residues 168-216 and 382-407; these read LNTM…INSL and LRGE…EDSK. Polar residues-rich tracts occupy residues 184–196 and 207–216; these read QPSN…QSES and DSRQNSINSL. Residues 289 to 539 are a coiled coil; sequence VEDVARQLEE…KEIQSSYREM (251 aa).

Belongs to the N4BP3 family.

The protein localises to the cytoplasmic vesicle. The protein resides in the cell projection. It is found in the axon. It localises to the dendrite. Functionally, plays a role in axon and dendrite arborization during cranial nerve development. Also important for neural crest migration and early development of other anterior structures including eye, brain and cranial cartilage. The sequence is that of NEDD4-binding protein 3-A from Xenopus laevis (African clawed frog).